The following is an 87-amino-acid chain: Probable Fe(2+)-trafficking protein (87 aa).

This sequence belongs to the Fe(2+)-trafficking protein family. In terms of assembly, monomer.

In terms of biological role, could be a mediator in iron transactions between iron acquisition and iron-requiring processes, such as synthesis and/or repair of Fe-S clusters in biosynthetic enzymes. The chain is Probable Fe(2+)-trafficking protein from Buchnera aphidicola subsp. Baizongia pistaciae (strain Bp).